Here is an 86-residue protein sequence, read N- to C-terminus: Small ribosomal subunit protein uS17 (86 aa).

This sequence belongs to the universal ribosomal protein uS17 family. As to quaternary structure, part of the 30S ribosomal subunit.

Functionally, one of the primary rRNA binding proteins, it binds specifically to the 5'-end of 16S ribosomal RNA. The sequence is that of Small ribosomal subunit protein uS17 from Caldicellulosiruptor saccharolyticus (strain ATCC 43494 / DSM 8903 / Tp8T 6331).